The primary structure comprises 163 residues: uncharacterized protein (163 aa).

A disordered region spans residues 128-163; the sequence is PKKEKIKKAKRKKKGAKRASKKQKAKSKSARKSRRV. A compositionally biased stretch (basic residues) spans 129-163; the sequence is KKEKIKKAKRKKKGAKRASKKQKAKSKSARKSRRV.

This is an uncharacterized protein from Sulfurisphaera tokodaii (strain DSM 16993 / JCM 10545 / NBRC 100140 / 7) (Sulfolobus tokodaii).